The following is a 366-amino-acid chain: uncharacterized protein (366 aa).

In terms of domain architecture, OBG-type G spans 64-289 (GTVGFIGFPS…LKETMWDYLN (226 aa)). Residues 70–77 (GFPSVGKS), 116–120 (DLPGI), and 247–250 (NKID) each bind GTP. Residues 289–365 (NLVRVYTRPR…LDEDVVTIVK (77 aa)) enclose the TGS domain.

This sequence belongs to the TRAFAC class OBG-HflX-like GTPase superfamily. OBG GTPase family.

This is an uncharacterized protein from Schizosaccharomyces pombe (strain 972 / ATCC 24843) (Fission yeast).